Here is a 402-residue protein sequence, read N- to C-terminus: 4-hydroxy-3-methylbut-2-enyl diphosphate reductase (402 aa).

Residue Cys-66 participates in [4Fe-4S] cluster binding. His-96 contributes to the (2E)-4-hydroxy-3-methylbut-2-enyl diphosphate binding site. Dimethylallyl diphosphate is bound at residue His-96. His-96 lines the isopentenyl diphosphate pocket. Residue Cys-157 participates in [4Fe-4S] cluster binding. His-185 contributes to the (2E)-4-hydroxy-3-methylbut-2-enyl diphosphate binding site. His-185 contacts dimethylallyl diphosphate. His-185 contacts isopentenyl diphosphate. Catalysis depends on Glu-187, which acts as the Proton donor. Thr-250 provides a ligand contact to (2E)-4-hydroxy-3-methylbut-2-enyl diphosphate. Residue Cys-288 participates in [4Fe-4S] cluster binding. Residues Ser-317, Ser-318, Asn-319, and Ser-379 each contribute to the (2E)-4-hydroxy-3-methylbut-2-enyl diphosphate site. Dimethylallyl diphosphate contacts are provided by Ser-317, Ser-318, Asn-319, and Ser-379. Isopentenyl diphosphate contacts are provided by Ser-317, Ser-318, Asn-319, and Ser-379.

It belongs to the IspH family. [4Fe-4S] cluster is required as a cofactor.

The enzyme catalyses isopentenyl diphosphate + 2 oxidized [2Fe-2S]-[ferredoxin] + H2O = (2E)-4-hydroxy-3-methylbut-2-enyl diphosphate + 2 reduced [2Fe-2S]-[ferredoxin] + 2 H(+). The catalysed reaction is dimethylallyl diphosphate + 2 oxidized [2Fe-2S]-[ferredoxin] + H2O = (2E)-4-hydroxy-3-methylbut-2-enyl diphosphate + 2 reduced [2Fe-2S]-[ferredoxin] + 2 H(+). It participates in isoprenoid biosynthesis; dimethylallyl diphosphate biosynthesis; dimethylallyl diphosphate from (2E)-4-hydroxy-3-methylbutenyl diphosphate: step 1/1. It functions in the pathway isoprenoid biosynthesis; isopentenyl diphosphate biosynthesis via DXP pathway; isopentenyl diphosphate from 1-deoxy-D-xylulose 5-phosphate: step 6/6. Catalyzes the conversion of 1-hydroxy-2-methyl-2-(E)-butenyl 4-diphosphate (HMBPP) into a mixture of isopentenyl diphosphate (IPP) and dimethylallyl diphosphate (DMAPP). Acts in the terminal step of the DOXP/MEP pathway for isoprenoid precursor biosynthesis. The protein is 4-hydroxy-3-methylbut-2-enyl diphosphate reductase of Nostoc punctiforme (strain ATCC 29133 / PCC 73102).